Reading from the N-terminus, the 176-residue chain is Calcineurin subunit B type 2 (176 aa).

Residue Gly-2 is the site of N-myristoyl glycine attachment. EF-hand domains lie at Asp-18–Pro-53, Arg-57–Lys-85, Asp-87–Asn-122, and Gln-128–His-163. Asp-31, Asp-33, Ser-35, Ser-37, Glu-42, Asp-63, Asp-65, Asn-67, Glu-69, Glu-74, Asp-100, Asp-102, Asp-104, and Glu-111 together coordinate Ca(2+). The segment at Gln-131 to Ser-136 is calcineurin A binding. Positions 141, 143, 145, 147, and 152 each coordinate Ca(2+).

This sequence belongs to the calcineurin regulatory subunit family. In terms of assembly, forms a complex composed of a calmodulin-dependent catalytic subunit (also known as calcineurin A) and a regulatory Ca(2+)-binding subunit (also known as calcineurin B). There are three catalytic subunits, each encoded by a separate gene (PPP3CA, PPP3CB, and PPP3CC) and two regulatory subunits which are also encoded by separate genes (PPP3R1 and PPP3R2). Interacts with SPATA33 (via PQIIIT motif). Testis specific.

It localises to the mitochondrion. Regulatory subunit of calcineurin, a calcium-dependent, calmodulin stimulated protein phosphatase. Confers calcium sensitivity. This is Calcineurin subunit B type 2 (Ppp3r2) from Rattus norvegicus (Rat).